A 377-amino-acid polypeptide reads, in one-letter code: Chaperone protein DnaJ (377 aa).

The J domain maps to 5–70; it reads DYYEVLEVSR…EKRTIYDRYG (66 aa). Residues 138-215 form a CR-type zinc finger; it reads GCEKKIDITY…CQGKGYHEET (78 aa). C151, C154, C167, C170, C189, C192, C203, and C206 together coordinate Zn(2+). CXXCXGXG motif repeat units follow at residues 151-158, 167-174, 189-196, and 203-210; these read CEECGGTG, CDYCGGQG, CPKCHGEG, and CPSCQGKG.

Belongs to the DnaJ family. In terms of assembly, homodimer. Zn(2+) serves as cofactor.

The protein localises to the cytoplasm. In terms of biological role, participates actively in the response to hyperosmotic and heat shock by preventing the aggregation of stress-denatured proteins and by disaggregating proteins, also in an autonomous, DnaK-independent fashion. Unfolded proteins bind initially to DnaJ; upon interaction with the DnaJ-bound protein, DnaK hydrolyzes its bound ATP, resulting in the formation of a stable complex. GrpE releases ADP from DnaK; ATP binding to DnaK triggers the release of the substrate protein, thus completing the reaction cycle. Several rounds of ATP-dependent interactions between DnaJ, DnaK and GrpE are required for fully efficient folding. Also involved, together with DnaK and GrpE, in the DNA replication of plasmids through activation of initiation proteins. The polypeptide is Chaperone protein DnaJ (Sulfurovum sp. (strain NBC37-1)).